The chain runs to 154 residues: Nuclear cap-binding protein subunit 2 (154 aa).

Residues 1-23 (MSTSVDLSSYRDQHFKGSRSEQE) form a disordered region. Positions 9 to 23 (SYRDQHFKGSRSEQE) are enriched in basic and acidic residues. MRNA is bound by residues tyrosine 10, tyrosine 33, 102–106 (RVDWD), 113–117 (RQYGR), and 123–124 (QV). In terms of domain architecture, RRM spans 30–108 (TTLYVGNLSF…RLIRVDWDAG (79 aa)).

The protein belongs to the RRM NCBP2 family. Component of the nuclear cap-binding complex (CBC), a heterodimer composed of Cbp80 and Cbp20 that interacts with m7GpppG-capped RNA. Interacts with Ars2.

Its subcellular location is the nucleus. In terms of biological role, component of the cap-binding complex (CBC), which binds co-transcriptionally to the 5' cap of pre-mRNAs and is involved in various processes such as pre-mRNA splicing and RNA-mediated gene silencing (RNAi). The CBC complex is involved in miRNA-mediated RNA interference via its interaction with Ars2 and is required for primary microRNAs (miRNAs) processing. Also involved in innate immunity via the short interfering RNAs (siRNAs) processing machinery by restricting the viral RNA production. In the CBC complex, Cbp20 recognizes and binds capped RNAs (m7GpppG-capped RNA) but requires Cbp80 to stabilize the movement of its N-terminal loop and lock the CBC into a high affinity cap-binding state with the cap structure. In Drosophila ananassae (Fruit fly), this protein is Nuclear cap-binding protein subunit 2 (Cbp20).